Reading from the N-terminus, the 134-residue chain is Interferon-induced transmembrane protein 5 (134 aa).

The span at 1–20 shows a compositional bias: basic and acidic residues; sequence MDTSYPREDPRAPSSRKADA. The tract at residues 1-31 is disordered; it reads MDTSYPREDPRAPSSRKADAAAHTALSMGTP. The Extracellular segment spans residues 1-39; it reads MDTSYPREDPRAPSSRKADAAAHTALSMGTPGPTPRDHM. Residues 40–60 form a helical membrane-spanning segment; that stretch reads LWSVFSTMYLNLCCLGFLALV. Residues C52, C53, and C86 are each lipidated (S-palmitoyl cysteine). At 61–88 the chain is on the cytoplasmic side; the sequence is HSVKARDQKMAGNLEAARQYGSKAKCYN. The chain crosses the membrane as a helical span at residues 89 to 109; that stretch reads ILAAMWTLVPPLLLLGLVVTG. At 110–134 the chain is on the extracellular side; sequence ALHLSKLAKDSAAFFSTKFDEEDYN.

The protein belongs to the CD225/Dispanin family. In terms of assembly, interacts with FKBP11. In terms of processing, palmitoylated. As to expression, detected in embryonic bone (at protein level). Highly expressed in osteoblasts of adults and embryos. Expressed in primitive hemopoietic cells.

The protein localises to the cell membrane. In terms of biological role, required for normal bone mineralization. The chain is Interferon-induced transmembrane protein 5 (Ifitm5) from Mus musculus (Mouse).